A 324-amino-acid chain; its full sequence is MSKRIYARIAGTGGYLPEKVLTNDDLAHIVDTSDEWIRTRTGIRERHIAAEGETTSDLAYEAAICALEAAEVRSADLDLIVVGTTTPDLIFPSTACLLQARLGAVGCGAFDVNAACSGFVYALSVAEKFVSSGCSKTVLVVGADTLTRIIDWSDRTTCVLFGDGAGAVVLKADEDTGILSTHLHADGSKKELLWDPVGVSVGFGEGKDCGALLMKGNEVFKYAVKALDRVVDETLEANHLDKHELDWLIPHQANLRIIEATARRLDMSMDQVVVTVDRHGNTSTASVPLALDEAIRSGRVQRGQLLLLEAFGGGFTWGSALLRY.

Active-site residues include cysteine 116 and histidine 251. Residues glutamine 252–arginine 256 are ACP-binding. The active site involves asparagine 281.

It belongs to the thiolase-like superfamily. FabH family. As to quaternary structure, homodimer.

The protein localises to the cytoplasm. It carries out the reaction malonyl-[ACP] + acetyl-CoA + H(+) = 3-oxobutanoyl-[ACP] + CO2 + CoA. It functions in the pathway lipid metabolism; fatty acid biosynthesis. In terms of biological role, catalyzes the condensation reaction of fatty acid synthesis by the addition to an acyl acceptor of two carbons from malonyl-ACP. Catalyzes the first condensation reaction which initiates fatty acid synthesis and may therefore play a role in governing the total rate of fatty acid production. Possesses both acetoacetyl-ACP synthase and acetyl transacylase activities. Its substrate specificity determines the biosynthesis of branched-chain and/or straight-chain of fatty acids. In Xylella fastidiosa (strain 9a5c), this protein is Beta-ketoacyl-[acyl-carrier-protein] synthase III.